A 252-amino-acid polypeptide reads, in one-letter code: Serine/threonine phosphatase stp (252 aa).

Positions 1-22 (MHAEFRTDRGRIRHHNEDNGGV) are disordered. The region spanning 2–242 (HAEFRTDRGR…DNITVLLVER (241 aa)) is the PPM-type phosphatase domain. Mn(2+) contacts are provided by D36, G37, D194, and D233.

The protein belongs to the PP2C family. Requires Mn(2+) as cofactor.

It localises to the cytoplasm. The protein localises to the membrane. It carries out the reaction O-phospho-L-seryl-[protein] + H2O = L-seryl-[protein] + phosphate. The catalysed reaction is O-phospho-L-threonyl-[protein] + H2O = L-threonyl-[protein] + phosphate. Its function is as follows. Protein phosphatase that dephosphorylates EF-Tu. The protein is Serine/threonine phosphatase stp (stp) of Listeria innocua serovar 6a (strain ATCC BAA-680 / CLIP 11262).